Here is a 421-residue protein sequence, read N- to C-terminus: Gamma-glutamyl phosphate reductase (421 aa).

This sequence belongs to the gamma-glutamyl phosphate reductase family.

Its subcellular location is the cytoplasm. It carries out the reaction L-glutamate 5-semialdehyde + phosphate + NADP(+) = L-glutamyl 5-phosphate + NADPH + H(+). Its pathway is amino-acid biosynthesis; L-proline biosynthesis; L-glutamate 5-semialdehyde from L-glutamate: step 2/2. In terms of biological role, catalyzes the NADPH-dependent reduction of L-glutamate 5-phosphate into L-glutamate 5-semialdehyde and phosphate. The product spontaneously undergoes cyclization to form 1-pyrroline-5-carboxylate. The chain is Gamma-glutamyl phosphate reductase from Brucella suis biovar 1 (strain 1330).